The chain runs to 136 residues: Immunoglobulin J chain (136 aa).

3 cysteine pairs are disulfide-bonded: Cys-12–Cys-100, Cys-71–Cys-91, and Cys-108–Cys-133. Residue Asn-48 is glycosylated (N-linked (GlcNAc...) (complex) asparagine).

As to quaternary structure, part of the secretory IgA (sIgA) complex that consists of two, four or five IgA monomers, and two additional non-Ig polypeptides, namely the JCHAIN and the secretory component (the proteolytic product of PIGR). Part of the secretory IgM (sIgM) complex that consist of five IgM monomers, and two additional non-Ig polypeptides, namely the JCHAIN and the secretory component (the proteolytic product of PIGR). JCHAIN-containing IgM interacts (via CH4 domain) with FCRM (via Ig-like domain).

Its subcellular location is the secreted. Serves to link two monomer units of either IgM or IgA. In the case of IgM, the J chain-joined dimer is a nucleating unit for the IgM pentamer, and in the case of IgA it induces dimers and/or larger polymers. It also helps to bind these immunoglobulins to secretory component. This Oryctolagus cuniculus (Rabbit) protein is Immunoglobulin J chain.